The primary structure comprises 570 residues: Spastin (570 aa).

Residues 1–35 lie on the Cytoplasmic side of the membrane; that stretch reads MNSGHKARLRGGRACGPVSDGSARGNRLLFYTRSL. An intramembrane region (helical) is located at residues 36–52; the sequence is SRVPEWLLRVLLLLLRW. Residues 53–570 lie on the Cytoplasmic side of the membrane; sequence LFQPIRRAMA…NREYGDTTGV (518 aa). The region spanning 83-158 is the MIT domain; the sequence is YHKQAFEFIS…SMAEDRLKLL (76 aa). Residues 186–269 form a disordered region; that stretch reads APASGAVSKK…SPQRKRDMKN (84 aa). 3 stretches are compositionally biased toward polar residues: residues 199 to 208, 216 to 242, and 251 to 261; these read LTITNQTSLR, TPNA…NQKG, and VKASTTATASP. 335–342 contributes to the ATP binding site; that stretch reads GPPGNGKT.

The protein belongs to the AAA ATPase family. Spastin subfamily. In terms of assembly, homohexamer. The homohexamer is stabilized by ATP-binding. The homohexamer may adopt a ring conformation through which microtubules pass prior to being severed. Interacts with microtubules.

Its subcellular location is the membrane. The protein localises to the cytoplasm. It localises to the cytoskeleton. It is found in the microtubule organizing center. The protein resides in the centrosome. Its subcellular location is the perinuclear region. The protein localises to the nucleus. The enzyme catalyses n ATP + n H2O + a microtubule = n ADP + n phosphate + (n+1) alpha/beta tubulin heterodimers.. In terms of biological role, ATP-dependent microtubule severing protein that specifically recognizes and cuts microtubules that are polyglutamylated. Preferentially recognizes and acts on microtubules decorated with short polyglutamate tails: severing activity increases as the number of glutamates per tubulin rises from one to eight, but decreases beyond this glutamylation threshold. Microtubule severing promotes reorganization of cellular microtubule arrays and the release of microtubules from the centrosome following nucleation. Required for membrane traffic from the endoplasmic reticulum (ER) to the Golgi and for completion of the abscission stage of cytokinesis. Also plays a role in axon growth and the formation of axonal branches. The polypeptide is Spastin (Danio rerio (Zebrafish)).